The primary structure comprises 341 residues: Glucokinase (341 aa).

Residue 18–23 (GDIGGT) participates in ATP binding.

It belongs to the bacterial glucokinase family.

Its subcellular location is the cytoplasm. The enzyme catalyses D-glucose + ATP = D-glucose 6-phosphate + ADP + H(+). The protein is Glucokinase of Mesorhizobium japonicum (strain LMG 29417 / CECT 9101 / MAFF 303099) (Mesorhizobium loti (strain MAFF 303099)).